Reading from the N-terminus, the 546-residue chain is MTPGEVRRLYFIIRTFLSYGLDELIPKMRITLPLRLWRYSLFWMPNRHKDKPLGERLRLALQELGPVWIKFGQMLSTRRDLFPPHIADQLALLQDKVAPFDGKLAKQQIEAAMGGLPVEAWFDDFEIKPLASASIAQVHTARLKSNGKEVVIKVIRPDILPVIKADLKLIYRLARWVPRLLPDGRRLRPTEVVREYEKTLIDELNLLRESANAIQLRRNFEDSPMLYIPEVYPDYCSEGMMVMERIYGIPVSDVAALEKNGTNMKLLAERGVQVFFTQVFRDSFFHADMHPGNIFVSYEHPENPKYIGIDCGIVGSLNKEDKRYLAENFIAFFNRDYRKVAELHVDSGWVPPDTNVEEFEFAIRTVCEPIFEKPLAEISFGHVLLNLFNTARRFNMEVQPQLVLLQKTLLYVEGVGRQLYPQLDLWKTAKPFLESWIKDQVGIPALVRAFKEKAPFWVEKMPELPELVYDSLRQGKYLQHSVDKIARELQSNHVRQGQSRYFLGIGATLVLSGTFLLVSRPEWGLMPGWLMAGGLIAWFVGWRKTR.

The Protein kinase domain maps to 124–502 (DFEIKPLASA…HVRQGQSRYF (379 aa)). ATP contacts are provided by residues 130-138 (LASASIAQV) and K153. The Proton acceptor role is filled by D288. The next 2 membrane-spanning stretches (helical) occupy residues 501-521 (YFLG…VSRP) and 522-542 (EWGL…FVGW).

The protein belongs to the ABC1 family. UbiB subfamily.

Its subcellular location is the cell inner membrane. It participates in cofactor biosynthesis; ubiquinone biosynthesis [regulation]. Its function is as follows. Is probably a protein kinase regulator of UbiI activity which is involved in aerobic coenzyme Q (ubiquinone) biosynthesis. This chain is Probable protein kinase UbiB, found in Escherichia coli O127:H6 (strain E2348/69 / EPEC).